The chain runs to 175 residues: Inorganic pyrophosphatase 1 (175 aa).

Positions 30, 44, and 56 each coordinate substrate. Mg(2+)-binding residues include D66, D71, and D103. Y142 contacts substrate.

Belongs to the PPase family. In terms of assembly, homohexamer. Requires Mg(2+) as cofactor.

Its subcellular location is the cytoplasm. The enzyme catalyses diphosphate + H2O = 2 phosphate + H(+). Its function is as follows. Catalyzes the hydrolysis of inorganic pyrophosphate (PPi) forming two phosphate ions. The sequence is that of Inorganic pyrophosphatase 1 from Pseudomonas syringae pv. tomato (strain ATCC BAA-871 / DC3000).